The chain runs to 359 residues: Replication-associated protein (359 aa).

The CRESS-DNA virus Rep endonuclease domain maps to 8 to 116; the sequence is QINAKHYFLT…DGDVLEWGTF (109 aa). Residues 15-18 carry the RCR-1 motif; it reads FLTF. Residues E49, H57, and H59 each coordinate a divalent metal cation. The RCR-2 signature appears at 57 to 59; sequence HLH. The active-site For DNA cleavage activity is Y103. Positions 103 to 106 match the RCR-3 motif; the sequence is YIDK. Residue D107 participates in a divalent metal cation binding. The binding to RBR1 stretch occupies residues 143-153; the sequence is KSEALDVIKEL. An oligomerization region spans residues 156 to 176; it reads RDYILHFHNINSNLNMVFQVP. Residue 221-228 coordinates ATP; that stretch reads GDSRTGKT.

The protein belongs to the geminiviridae Rep protein family. As to quaternary structure, homooligomer. Interacts with the replication enhancer protein (REn). Interacts with host retinoblastoma-related protein 1 (RBR1), and may thereby induce the transcription of host replicative enzymes even if the cell is not dividing anymore. Interacts with host PCNA. Interacts with host SCE1 protein. Mg(2+) serves as cofactor. Requires Mn(2+) as cofactor.

It localises to the host nucleus. In terms of biological role, essential for the replication of viral ssDNA. The closed circular ssDNA genome is first converted to a superhelical dsDNA. Rep binds a specific region at the genome origin of replication. It introduces an endonucleolytic nick within the conserved sequence 5'-TAATATTAC-3' in the intergenic region of the genome present in all geminiviruses, thereby initiating the rolling circle replication (RCR). Following cleavage, binds covalently to the 5'-phosphate of DNA as a tyrosyl ester. The cleavage gives rise to a free 3'-OH that serves as a primer for the cellular DNA polymerase. The polymerase synthesizes the (+) strand DNA by rolling circle mechanism. After one round of replication, a Rep-catalyzed nucleotidyl transfer reaction releases a circular single-stranded virus genome, thereby terminating the replication. Displays origin-specific DNA cleavage, nucleotidyl transferase, ATPase and helicase activities. The protein is Replication-associated protein of Solanum lycopersicum (Tomato).